Consider the following 118-residue polypeptide: Large ribosomal subunit protein uL24 (118 aa).

The protein belongs to the universal ribosomal protein uL24 family. Part of the 50S ribosomal subunit.

In terms of biological role, one of two assembly initiator proteins, it binds directly to the 5'-end of the 23S rRNA, where it nucleates assembly of the 50S subunit. Its function is as follows. One of the proteins that surrounds the polypeptide exit tunnel on the outside of the subunit. This is Large ribosomal subunit protein uL24 from Synechococcus sp. (strain WH7803).